Reading from the N-terminus, the 170-residue chain is Microfibrillar-associated protein 5 (170 aa).

The first 20 residues, Met1–Gly20, serve as a signal peptide directing secretion. Residues Arg30–Asp32 carry the Cell attachment site motif. N-linked (GlcNAc...) asparagine glycosylation is present at Asn76.

It belongs to the MFAP family. In terms of assembly, interacts with TGFB2. Interacts with BMP2. Interacts with FBN1 (via N-terminal domain) and FBN2. Forms intermolecular disulfide bonds either with other MAGP-2 molecules or with other components of the microfibrils. Associated with fibrillin-containing microfibrils of the developing nuchal ligament.

Its subcellular location is the secreted. It is found in the extracellular space. The protein localises to the extracellular matrix. In terms of biological role, may play a role in hematopoiesis. In the cardiovascular system, could regulate growth factors or participate in cell signaling in maintaining large vessel integrity. Component of the elastin-associated microfibrils. The polypeptide is Microfibrillar-associated protein 5 (MFAP5) (Bos taurus (Bovine)).